The sequence spans 333 residues: L-lactate dehydrogenase B chain (333 aa).

NAD(+) contacts are provided by residues 29–57 (GQVGMACAISILGKRLGDELALVDVWEDK) and Arg-99. Substrate is bound by residues Arg-106, Asn-138, and Arg-169. Position 138 (Asn-138) interacts with NAD(+). Catalysis depends on His-193, which acts as the Proton acceptor. Thr-248 provides a ligand contact to substrate.

Belongs to the LDH/MDH superfamily. LDH family. As to quaternary structure, homotetramer.

Its subcellular location is the cytoplasm. It carries out the reaction (S)-lactate + NAD(+) = pyruvate + NADH + H(+). It functions in the pathway fermentation; pyruvate fermentation to lactate; (S)-lactate from pyruvate: step 1/1. Interconverts simultaneously and stereospecifically pyruvate and lactate with concomitant interconversion of NADH and NAD(+). This Alligator mississippiensis (American alligator) protein is L-lactate dehydrogenase B chain (LDHB).